The sequence spans 117 residues: MDKKELFDTVINLEEQIGSLYRQLGDLKNHIGEVIEENHQLQMENQHLRERLDQSDRDKSSETENDSAQKPGHSDIGEGHDNLARLYQEGFHICNVHYGSIRKEGDCLFCLSFLNKK.

A disordered region spans residues 45–81 (NQHLRERLDQSDRDKSSETENDSAQKPGHSDIGEGHD). 2 stretches are compositionally biased toward basic and acidic residues: residues 46 to 62 (QHLR…KSSE) and 72 to 81 (GHSDIGEGHD). 4 residues coordinate Zn(2+): His-92, Cys-94, Cys-107, and Cys-110.

The protein belongs to the YabA family. Homotetramer. Interacts with both DnaA and DnaN, acting as a bridge between these two proteins. Requires Zn(2+) as cofactor.

It localises to the cytoplasm. It is found in the nucleoid. Functionally, involved in control of chromosome replication initiation. Inhibits the cooperative binding of DnaA to the oriC region, thus negatively regulating initiation of chromosome replication. Inhibits the ability of DnaA-ATP to form a helix on DNA; does not disassemble preformed DnaA-DNA helices. Decreases the residence time of DnaA on the chromosome at its binding sites (oriC, replication forks and promoter-binding sites). Tethers DnaA to the replication machinery via the DNA polymerase beta sliding clamp subunit (dnaN). Associates with oriC and other DnaA targets on the chromosome in a DnaA-dependent manner. The chain is Replication initiation control protein YabA from Bacillus pumilus (strain SAFR-032).